A 299-amino-acid chain; its full sequence is Protease HtpX homolog (299 aa).

The next 2 membrane-spanning stretches (helical) occupy residues 15–35 (ILLL…GYLF) and 39–59 (GLGG…SMIF). His143 lines the Zn(2+) pocket. Residue Glu144 is part of the active site. Residue His147 participates in Zn(2+) binding. The next 2 membrane-spanning stretches (helical) occupy residues 158–178 (IAVA…RMMW) and 198–218 (IIML…ATLV). Glu227 contacts Zn(2+).

It belongs to the peptidase M48B family. Zn(2+) is required as a cofactor.

It localises to the cell membrane. The polypeptide is Protease HtpX homolog (Streptococcus pneumoniae serotype 19F (strain G54)).